The following is a 386-amino-acid chain: Leupaxin (386 aa).

Met-1 is modified (N-acetylmethionine). The LD motif 1 signature appears at 3-15 (ELDALLEELERST). Residues 13–41 (RSTLQDSDEYSNPAPLPLDQHSRKETNLD) are disordered. Ser-19 bears the Phosphoserine mark. Tyr-22 carries the phosphotyrosine modification. Position 54 is a phosphoserine (Ser-54). A Phosphotyrosine modification is found at Tyr-62. 2 consecutive short sequence motifs (LD motif) follow at residues 70–82 (NVYSEAQEPKESP) and 92–103 (QLDELMAHLTEM). Tyr-72 is modified (phosphotyrosine; by LYN). A Phosphoserine modification is found at Ser-81. LIM zinc-binding domains follow at residues 150–208 (GHCA…QLFS), 209–267 (PRCA…AMFS), 268–326 (PKCG…HRRG), and 327–386 (TLCH…LFPL).

Belongs to the paxillin family. In terms of assembly, interacts with PTPN22. Interacts with unphosphorylated ITGA4. Interacts with PTK2B/PYK2, PTPN12, AR and SRF. Interacts (via LD motif 3) with LYN and the interaction is induced upon B-cell antigen receptor (BCR) activation. Interacts (via LD motif 3) with PTK2/FAK. Phosphorylated on tyrosine residues. Phosphorylation on Tyr-72 is important for its inhibitory function. Bombesin stimulates phosphorylation on Tyr-22, Tyr-62 and Tyr-72. As to expression, macrophages, monocytes and osteoclasts (at protein level). Strongly expressed in cells and tissues of hematopoietic origin. Highest expression in lymphoid tissues such as spleen, lymph node, thymus and appendix and in the vascular smooth muscle. Lower levels in bone marrow and fetal liver. Also expressed in peripheral blood lymphocytes and a number of hematopoietic cell lines. Very low levels found in epithelial cell lines. Expressed in prostate cancer (PCa) cells and its expression intensity is directly linked to PCa progression.

Its subcellular location is the cytoplasm. The protein localises to the cell junction. It is found in the focal adhesion. It localises to the nucleus. The protein resides in the perinuclear region. Its subcellular location is the cell projection. The protein localises to the podosome. It is found in the cell membrane. Transcriptional coactivator for androgen receptor (AR) and serum response factor (SRF). Contributes to the regulation of cell adhesion, spreading and cell migration and acts as a negative regulator in integrin-mediated cell adhesion events. Suppresses the integrin-induced tyrosine phosphorylation of paxillin (PXN). May play a critical role as an adapter protein in the formation of the adhesion zone in osteoclasts. Negatively regulates B-cell antigen receptor (BCR) signaling. This is Leupaxin (LPXN) from Homo sapiens (Human).